Consider the following 988-residue polypeptide: Voltage-gated delayed rectifier potassium channel KCNH5 (988 aa).

Residues 1–217 (MPGGKRGLVA…LHYCAFKTTW (217 aa)) are Cytoplasmic-facing. One can recognise a PAS domain in the interval 14–86 (TFLENIVRRS…TIEKVRQTFD (73 aa)). In terms of domain architecture, PAC spans 91–143 (NCFEVLLYKKNRTPVWFYMQIAPIRNEHEKVVLFLCTFKDITLFKQPIEDDST). Residues 218-238 (DWVILILTFYTAIMVPYNVSF) form a helical membrane-spanning segment. Topologically, residues 239–243 (KTKQN) are extracellular. The helical transmembrane segment at 244–264 (NIAWLVLDSVVDVIFLVDIVL) threads the bilayer. Residues 265–291 (NFHTTFVGPGGEVISDPKLIRMNYLKT) are Cytoplasmic-facing. A helical membrane pass occupies residues 292–312 (WFVIDLLSCLPYDIINAFENV). Residues 313–319 (DEGISSL) are Extracellular-facing. The chain crosses the membrane as a helical; Voltage-sensor span at residues 320–340 (FSSLKVVRLLRLGRVARKLDH). Residues 341–346 (YLEYGA) are Cytoplasmic-facing. The chain crosses the membrane as a helical span at residues 347–367 (AVLVLLVCVFGLVAHWLACIW). The Extracellular segment spans residues 368 to 419 (YSIGDYEVIDEVTNTIQIDSWLYQLALSIGTPYRYNTSAGIWEGGPSKDSLY). N403 is a glycosylation site (N-linked (GlcNAc...) asparagine). Positions 420-440 (VSSLYFTMTSLTTIGFGNIAP) form an intramembrane region, pore-forming. A Selectivity filter motif is present at residues 432-437 (TIGFGN). Residues 441–446 (TTDVEK) are Extracellular-facing. Residues 447 to 467 (MFSVAMMMVGSLLYATIFGNV) traverse the membrane as a helical segment. Residues 468 to 988 (TTIFQQMYAN…PESDKDEINF (521 aa)) lie on the Cytoplasmic side of the membrane. 550–668 (AFRLASDGCL…SFSRNLTLTC (119 aa)) serves as a coordination point for a nucleoside 3',5'-cyclic phosphate. Residues 704–715 (HPVRKLFQKFKQ) form a calmodulin-binding region. The segment at 721 to 741 (IQGSAQSDPERSQLQVESRPL) is disordered. Polar residues predominate over residues 723–741 (GSAQSDPERSQLQVESRPL). K785 participates in a covalent cross-link: Glycyl lysine isopeptide (Lys-Gly) (interchain with G-Cter in ubiquitin). The disordered stretch occupies residues 838 to 893 (GLLSEDPKGSDSENSVTKNPLRKTDSCDSGITKSDLRLDKAGEARSPLEHSPSQAD). Residues 871-885 (SDLRLDKAGEARSPL) show a composition bias toward basic and acidic residues. A Phosphoserine modification is found at S883. The CAD (involved in subunit assembly) stretch occupies residues 909 to 948 (TLQEVKHELKEDIQLLSCRMTALEKQVAEILKLLSEKSVP).

The protein belongs to the potassium channel family. H (Eag) (TC 1.A.1.20) subfamily. Kv10.2/KCNH5 sub-subfamily. In terms of assembly, homotetramer. The potassium channel is probably composed of a homo- or heterotetrameric complex of pore-forming alpha subunits that can associate with modulating beta subunits. Heteromultimer with KCNH1/EAG.

It localises to the membrane. It carries out the reaction K(+)(in) = K(+)(out). Its function is as follows. Pore-forming (alpha) subunit of a voltage-gated delayed rectifier potassium channel that mediates outward-rectifying potassium currents which, on depolarization, reaches a steady-state level and do not inactivate. The kinetic is characterized by a slow activation time course and a small voltage dependence of the activation time constants, therefore, starts to open at more negative voltages. The activation kinetics depend on the prepulse potential and external divalent cation concentration. The time course of activation is biphasic with a fast and a slowly activating current component. With negative prepulses, the current activation is delayed and slowed down several fold, whereas more positive prepulses speed up activation, therefore the activation rate depends on holding potential. This chain is Voltage-gated delayed rectifier potassium channel KCNH5, found in Mus musculus (Mouse).